The sequence spans 153 residues: Insulin-like growth factor 1 (153 aa).

The b stretch occupies residues 49–77 (GPETLCGAELVDALQFVCGPRGFYFNKPT). Intrachain disulfides connect Cys-54-Cys-96, Cys-66-Cys-109, and Cys-95-Cys-100. The segment at 78–89 (GYGSSIRRAPQT) is c. Residues 90-110 (GIVDECCFRSCDLRRLEMYCA) form an a region. The interval 111 to 118 (PLKPTKAA) is d. Positions 119 to 153 (RSIRAQRHTDMPKTQKEVHLKNTSRGSAGNKTYRM) are cleaved as a propeptide — e peptide. Residues 120–153 (SIRAQRHTDMPKTQKEVHLKNTSRGSAGNKTYRM) form a disordered region. Positions 125-138 (RHTDMPKTQKEVHL) are enriched in basic and acidic residues. Residues 139–153 (KNTSRGSAGNKTYRM) show a composition bias toward polar residues.

Belongs to the insulin family. Forms a ternary complex with IGFR1 and ITGAV:ITGB3. Forms a ternary complex with IGFR1 and ITGA6:ITGB4. Interacts with SH2D3C isoform 2. Forms a ternary complex with IGFBP3 and ALS.

It localises to the secreted. Functionally, the insulin-like growth factors, isolated from plasma, are structurally and functionally related to insulin but have a much higher growth-promoting activity. May be a physiological regulator of [1-14C]-2-deoxy-D-glucose (2DG) transport and glycogen synthesis in osteoblasts. Stimulates glucose transport in bone-derived osteoblastic (PyMS) cells and is effective at much lower concentrations than insulin, not only regarding glycogen and DNA synthesis but also with regard to enhancing glucose uptake. May play a role in synapse maturation. Ca(2+)-dependent exocytosis of IGF1 is required for sensory perception of smell in the olfactory bulb. Acts as a ligand for IGF1R. Binds to the alpha subunit of IGF1R, leading to the activation of the intrinsic tyrosine kinase activity which autophosphorylates tyrosine residues in the beta subunit thus initiating a cascade of down-stream signaling events leading to activation of the PI3K-AKT/PKB and the Ras-MAPK pathways. Binds to integrins ITGAV:ITGB3 and ITGA6:ITGB4. Its binding to integrins and subsequent ternary complex formation with integrins and IGFR1 are essential for IGF1 signaling. Induces the phosphorylation and activation of IGFR1, MAPK3/ERK1, MAPK1/ERK2 and AKT1. As part of the MAPK/ERK signaling pathway, acts as a negative regulator of apoptosis in cardiomyocytes via promotion of STUB1/CHIP-mediated ubiquitination and degradation of ICER-type isoforms of CREM. The chain is Insulin-like growth factor 1 from Mus musculus (Mouse).